Here is a 351-residue protein sequence, read N- to C-terminus: Histidinol-phosphate aminotransferase (351 aa).

An N6-(pyridoxal phosphate)lysine modification is found at Lys-214.

Belongs to the class-II pyridoxal-phosphate-dependent aminotransferase family. Histidinol-phosphate aminotransferase subfamily. The cofactor is pyridoxal 5'-phosphate.

The catalysed reaction is L-histidinol phosphate + 2-oxoglutarate = 3-(imidazol-4-yl)-2-oxopropyl phosphate + L-glutamate. The protein operates within amino-acid biosynthesis; L-histidine biosynthesis; L-histidine from 5-phospho-alpha-D-ribose 1-diphosphate: step 7/9. This Methanosphaerula palustris (strain ATCC BAA-1556 / DSM 19958 / E1-9c) protein is Histidinol-phosphate aminotransferase.